Consider the following 691-residue polypeptide: Seven transmembrane domain-containing tyrosine-protein kinase 1 (691 aa).

At 1-33 the chain is on the extracellular side; the sequence is MDTSCVSINQCGFCTYLFNRSIPLAGEGDGAIM. A helical membrane pass occupies residues 34 to 54; that stretch reads FNTMVDSMALGYIFSALYLLF. The Cytoplasmic segment spans residues 55–126; that stretch reads RLQRSYTYLQ…PRIINSTYFK (72 aa). The chain crosses the membrane as a helical span at residues 127 to 144; it reads YTLFVSLWLAFEGLLLLF. Residues 145-153 lie on the Extracellular side of the membrane; it reads LPPNSLAYP. A helical transmembrane segment spans residues 154–176; the sequence is AFVIIVGTGHIVTDNWVLVFLYG. At 177–186 the chain is on the cytoplasmic side; sequence KEDDRFSARR. Residues 187–207 traverse the membrane as a helical segment; that stretch reads SFYSCTLLYLIICCTTLASFF. Over 208 to 227 the chain is Extracellular; sequence DDQTMCKKNDCQTFMFQDEY. The chain crosses the membrane as a helical span at residues 228–248; the sequence is TSLAITVASLVVYTIVLGMTI. The Cytoplasmic portion of the chain corresponds to 249 to 258; that stretch reads KRSFLRPTGR. A helical membrane pass occupies residues 259-279; the sequence is IWLLFLMGYNCISSVGALLNI. Topologically, residues 280 to 284 are extracellular; the sequence is LDVDA. A helical transmembrane segment spans residues 285–305; sequence GYCFLGIAAIIYSFSYGPLLF. Residues 306-691 lie on the Cytoplasmic side of the membrane; the sequence is RTCGNDTNLL…GAEEFHYIDG (386 aa). The 272-residue stretch at 363-634 folds into the Protein kinase domain; the sequence is FKFGQVIGEG…ANVPISNTYV (272 aa). Residues 369–377 and Lys390 each bind ATP; that span reads IGEGYFGEV. Catalysis depends on Asp493, which acts as the Proton acceptor.

The protein belongs to the protein kinase superfamily. TKL Tyr protein kinase family.

Its subcellular location is the membrane. It carries out the reaction L-tyrosyl-[protein] + ATP = O-phospho-L-tyrosyl-[protein] + ADP + H(+). The chain is Seven transmembrane domain-containing tyrosine-protein kinase 1 (7tmk1) from Dictyostelium discoideum (Social amoeba).